The primary structure comprises 313 residues: Ribosomal protein uL3 glutamine methyltransferase (313 aa).

It belongs to the protein N5-glutamine methyltransferase family. PrmB subfamily.

It carries out the reaction L-glutaminyl-[ribosomal protein uL3] + S-adenosyl-L-methionine = N(5)-methyl-L-glutaminyl-[ribosomal protein uL3] + S-adenosyl-L-homocysteine + H(+). Its function is as follows. Methylates large ribosomal subunit protein uL3 on a specific glutamine residue. This is Ribosomal protein uL3 glutamine methyltransferase from Pasteurella multocida (strain Pm70).